A 730-amino-acid polypeptide reads, in one-letter code: Stonin-1 (730 aa).

3 disordered regions span residues 1–26 (MYST…KRKD), 38–83 (NGLK…PLST), and 132–159 (SPHV…AGPQ). 2 stretches are compositionally biased toward low complexity: residues 54–65 (PSSASSTPLSSP) and 132–143 (SPHVSLPSSHSH). The SHD domain occupies 269-402 (GWSFMLRIPE…KLPATAKPKN (134 aa)). Residues 407–710 (EQEICLDIQD…ACYNIQVEIE (304 aa)) form the MHD domain.

The protein belongs to the Stoned B family.

Its subcellular location is the cytoplasm. The protein localises to the membrane. Functionally, may be involved in the endocytic machinery. In Mus musculus (Mouse), this protein is Stonin-1 (Ston1).